The chain runs to 101 residues: Small ribosomal subunit protein uS14 (101 aa).

The segment covering 1–10 has biased composition (basic and acidic residues); the sequence is MAKKSAIEKN. The interval 1–23 is disordered; the sequence is MAKKSAIEKNNRRKKMTKNAAPK. A compositionally biased stretch (basic residues) spans 11-23; that stretch reads NRRKKMTKNAAPK.

This sequence belongs to the universal ribosomal protein uS14 family. Part of the 30S ribosomal subunit. Contacts proteins S3 and S10.

Functionally, binds 16S rRNA, required for the assembly of 30S particles and may also be responsible for determining the conformation of the 16S rRNA at the A site. The protein is Small ribosomal subunit protein uS14 of Rhodopseudomonas palustris (strain TIE-1).